We begin with the raw amino-acid sequence, 464 residues long: V-type ATP synthase beta chain (464 aa).

It belongs to the ATPase alpha/beta chains family.

Its function is as follows. Produces ATP from ADP in the presence of a proton gradient across the membrane. The V-type beta chain is a regulatory subunit. In Streptococcus sanguinis (strain SK36), this protein is V-type ATP synthase beta chain.